The sequence spans 989 residues: Voltage-gated delayed rectifier potassium channel KCNH1 (989 aa).

Topologically, residues Met1–Trp220 are cytoplasmic. A PAS domain is found at Gln14–Ser94. The PAC domain maps to Asn93–Cys145. The tract at residues Phe151–Arg162 is required for phosphatidylinositol bisphosphate binding. A helical transmembrane segment spans residues Asp221–Phe241. The Extracellular portion of the chain corresponds to Lys242–Val248. Residues Ala249–Phe269 traverse the membrane as a helical segment. The Cytoplasmic portion of the chain corresponds to His270–Asn290. A helical transmembrane segment spans residues Tyr291–Ile309. Residues Asn310–Gly345 lie on the Extracellular side of the membrane. Residues Ile346 to Leu368 form a helical; Voltage-sensor membrane-spanning segment. At Asp369–Ala377 the chain is on the cytoplasmic side. The chain crosses the membrane as a helical span at residues Val378 to Ser399. Residues Ile400 to Ser448 are Extracellular-facing. Residues Asn415 and Asn433 are each glycosylated (N-linked (GlcNAc...) asparagine). An intramembrane region (pore-forming) is located at residues Val449–Ala470. Residues Ser463–Asn468 carry the Selectivity filter motif. Topologically, residues Pro471–Lys477 are extracellular. Residues Ile478–Val498 form a helical membrane-spanning segment. The Cytoplasmic segment spans residues Thr499–Ser989. The interval Lys673–Asn770 is calmodulin-binding. The interval Tyr699–Leu701 is interaction with cyclic nucleotide-binding pocket. Basic and acidic residues-rich tracts occupy residues Glu857–Ser879 and Ser887–Gln901. Disordered stretches follow at residues Glu857–Pro905 and Arg961–Ser989. The tract at residues Ala924–Ala964 is CAD (involved in subunit assembly). Positions Gly962–Pro979 are enriched in polar residues. A phosphoserine mark is found at Ser974, Ser978, and Ser981. A compositionally biased stretch (basic and acidic residues) spans Glu980–Ser989.

Belongs to the potassium channel family. H (Eag) (TC 1.A.1.20) subfamily. Kv10.1/KCNH1 sub-subfamily. As to quaternary structure, homomultimer. The potassium channel is composed of a homo- or heterotetrameric complex of pore-forming alpha subunits that can associate with modulating beta subunits. Heteromultimer with KCNH5/EAG2. Interacts with ALG10B. Interacts with RABEP1. Interacts (via C-terminus) with CTTN. Interacts (via C-terminal cytoplasmic region) with Ca(2+)-bound calmodulin. Post-translationally, channel activity is regulated via tyrosine phosphorylation/dephosphorylation by SRC and PTPN6. Detected in brain (at protein level). Highly expressed in olfactory bulb. Detected in brain cortex, hippocampus, brain stem, striatum, thalamus, hypothalamus and spinal cord.

It localises to the cell membrane. The protein resides in the nucleus inner membrane. Its subcellular location is the cell projection. The protein localises to the dendrite. It is found in the axon. It localises to the presynaptic cell membrane. The protein resides in the perikaryon. Its subcellular location is the postsynaptic density membrane. The protein localises to the early endosome membrane. The enzyme catalyses K(+)(in) = K(+)(out). Its activity is regulated as follows. Channel activity is inhibited by interaction with Ca(2+)-bound calmodulin. Interaction of a single pore-forming alpha subunit with a calmodulin chain is sufficient to promote channel closure. Channel activity is not regulated by cyclic nucleotides. Channel activity is inhibited by binding intracellular phosphatidylinositol-3,5-bisphosphate and phosphatidylinositol-4,5-bisphosphate (PIP2), but is not inhibited by phosphatidylinositol 4-phosphate. Pore-forming (alpha) subunit of a voltage-gated delayed rectifier potassium channel that mediates outward-rectifying potassium currents which, on depolarization, reaches a steady-state level and do not inactivate. The activation kinetics depend on the prepulse potential and external divalent cation concentration. With negative prepulses, the current activation is delayed and slowed down several fold, whereas more positive prepulses speed up activation. The time course of activation is biphasic with a fast and a slowly activating current component. Activates at more positive membrane potentials and exhibit a steeper activation curve. Channel properties are modulated by subunit assembly. Mediates IK(NI) current in myoblasts. Involved in the regulation of cell proliferation and differentiation, in particular adipogenic and osteogenic differentiation in bone marrow-derived mesenchymal stem cells (MSCs). The protein is Voltage-gated delayed rectifier potassium channel KCNH1 of Mus musculus (Mouse).